A 387-amino-acid polypeptide reads, in one-letter code: Queuine tRNA-ribosyltransferase (387 aa).

D105 serves as the catalytic Proton acceptor. Substrate-binding positions include 105–109 (DSGGF), D177, and G248. The RNA binding stretch occupies residues 278 to 284 (GIGDLPS). D297 functions as the Nucleophile in the catalytic mechanism. The tract at residues 302 to 306 (TRAAR) is RNA binding; important for wobble base 34 recognition. Zn(2+) is bound by residues C335, C337, C340, and H366.

It belongs to the queuine tRNA-ribosyltransferase family. In terms of assembly, homodimer. Within each dimer, one monomer is responsible for RNA recognition and catalysis, while the other monomer binds to the replacement base PreQ1. Zn(2+) is required as a cofactor.

The enzyme catalyses 7-aminomethyl-7-carbaguanine + guanosine(34) in tRNA = 7-aminomethyl-7-carbaguanosine(34) in tRNA + guanine. It functions in the pathway tRNA modification; tRNA-queuosine biosynthesis. Catalyzes the base-exchange of a guanine (G) residue with the queuine precursor 7-aminomethyl-7-deazaguanine (PreQ1) at position 34 (anticodon wobble position) in tRNAs with GU(N) anticodons (tRNA-Asp, -Asn, -His and -Tyr). Catalysis occurs through a double-displacement mechanism. The nucleophile active site attacks the C1' of nucleotide 34 to detach the guanine base from the RNA, forming a covalent enzyme-RNA intermediate. The proton acceptor active site deprotonates the incoming PreQ1, allowing a nucleophilic attack on the C1' of the ribose to form the product. After dissociation, two additional enzymatic reactions on the tRNA convert PreQ1 to queuine (Q), resulting in the hypermodified nucleoside queuosine (7-(((4,5-cis-dihydroxy-2-cyclopenten-1-yl)amino)methyl)-7-deazaguanosine). In Protochlamydia amoebophila (strain UWE25), this protein is Queuine tRNA-ribosyltransferase.